The chain runs to 31 residues: Conotoxin pc6b (31 aa).

3 disulfide bridges follow: Cys2-Cys20, Cys9-Cys25, and Cys19-Cys29.

The protein belongs to the conotoxin O1 superfamily. As to expression, expressed by the venom duct.

Its subcellular location is the secreted. The chain is Conotoxin pc6b from Conus pictus (Cone snail).